The following is a 1533-amino-acid chain: Glycogen debranching enzyme (1533 aa).

Ser-64 is subject to Phosphoserine. Catalysis depends on residues Asp-527, His-530, and Asp-628.

The protein belongs to the glycogen debranching enzyme family. Monomer. Interacts with NHLRC1/malin. Ubiquitinated. As to expression, ubiquitous. Expressed in striated skeletal muscle, heart, liver, spleen, skin, spinal cord, lung, kidney and testicle.

It localises to the cytoplasm. It catalyses the reaction Transfers a segment of a (1-&gt;4)-alpha-D-glucan to a new position in an acceptor, which may be glucose or a (1-&gt;4)-alpha-D-glucan.. The catalysed reaction is Hydrolysis of (1-&gt;6)-alpha-D-glucosidic branch linkages in glycogen phosphorylase limit dextrin.. Its function is as follows. Multifunctional enzyme acting as 1,4-alpha-D-glucan:1,4-alpha-D-glucan 4-alpha-D-glycosyltransferase and amylo-1,6-glucosidase in glycogen degradation. The protein is Glycogen debranching enzyme of Equus caballus (Horse).